The following is a 70-amino-acid chain: DNA gyrase inhibitor YacG (70 aa).

Positions 20, 23, 35, and 39 each coordinate Zn(2+).

Belongs to the DNA gyrase inhibitor YacG family. In terms of assembly, interacts with GyrB. The cofactor is Zn(2+).

Its function is as follows. Inhibits all the catalytic activities of DNA gyrase by preventing its interaction with DNA. Acts by binding directly to the C-terminal domain of GyrB, which probably disrupts DNA binding by the gyrase. In Rhizobium etli (strain ATCC 51251 / DSM 11541 / JCM 21823 / NBRC 15573 / CFN 42), this protein is DNA gyrase inhibitor YacG.